Here is a 190-residue protein sequence, read N- to C-terminus: Peptidyl-tRNA hydrolase (190 aa).

Y18 serves as a coordination point for tRNA. The Proton acceptor role is filled by H23. F69, N71, and N117 together coordinate tRNA.

This sequence belongs to the PTH family. Monomer.

It localises to the cytoplasm. It carries out the reaction an N-acyl-L-alpha-aminoacyl-tRNA + H2O = an N-acyl-L-amino acid + a tRNA + H(+). In terms of biological role, hydrolyzes ribosome-free peptidyl-tRNAs (with 1 or more amino acids incorporated), which drop off the ribosome during protein synthesis, or as a result of ribosome stalling. Functionally, catalyzes the release of premature peptidyl moieties from peptidyl-tRNA molecules trapped in stalled 50S ribosomal subunits, and thus maintains levels of free tRNAs and 50S ribosomes. This chain is Peptidyl-tRNA hydrolase, found in Rhodococcus jostii (strain RHA1).